A 252-amino-acid polypeptide reads, in one-letter code: Ubiquinone/menaquinone biosynthesis C-methyltransferase UbiE (252 aa).

Residues T75, D96, and 123–124 (NA) each bind S-adenosyl-L-methionine.

Belongs to the class I-like SAM-binding methyltransferase superfamily. MenG/UbiE family.

It catalyses the reaction a 2-demethylmenaquinol + S-adenosyl-L-methionine = a menaquinol + S-adenosyl-L-homocysteine + H(+). The catalysed reaction is a 2-methoxy-6-(all-trans-polyprenyl)benzene-1,4-diol + S-adenosyl-L-methionine = a 5-methoxy-2-methyl-3-(all-trans-polyprenyl)benzene-1,4-diol + S-adenosyl-L-homocysteine + H(+). It functions in the pathway quinol/quinone metabolism; menaquinone biosynthesis; menaquinol from 1,4-dihydroxy-2-naphthoate: step 2/2. Its pathway is cofactor biosynthesis; ubiquinone biosynthesis. Methyltransferase required for the conversion of demethylmenaquinol (DMKH2) to menaquinol (MKH2) and the conversion of 2-polyprenyl-6-methoxy-1,4-benzoquinol (DDMQH2) to 2-polyprenyl-3-methyl-6-methoxy-1,4-benzoquinol (DMQH2). In Methylobacterium nodulans (strain LMG 21967 / CNCM I-2342 / ORS 2060), this protein is Ubiquinone/menaquinone biosynthesis C-methyltransferase UbiE.